The chain runs to 155 residues: Probable cyclic pyranopterin monophosphate synthase (155 aa).

Substrate-binding positions include 74–76 (MCH) and 110–111 (ME). D125 is a catalytic residue.

Belongs to the MoaC family. In terms of assembly, homohexamer; trimer of dimers.

The catalysed reaction is (8S)-3',8-cyclo-7,8-dihydroguanosine 5'-triphosphate = cyclic pyranopterin phosphate + diphosphate. It functions in the pathway cofactor biosynthesis; molybdopterin biosynthesis. Functionally, catalyzes the conversion of (8S)-3',8-cyclo-7,8-dihydroguanosine 5'-triphosphate to cyclic pyranopterin monophosphate (cPMP). The protein is Probable cyclic pyranopterin monophosphate synthase of Methanoregula boonei (strain DSM 21154 / JCM 14090 / 6A8).